Here is a 67-residue protein sequence, read N- to C-terminus: Conotoxin TsMMSK-011 (67 aa).

Residues 1–22 (MMSKLGVLLTICLLLFPLTVLP) form the signal peptide. Residues 23–50 (MDGDQPADLPALRTQDIATDQSPWFDPV) constitute a propeptide that is removed on maturation. 3 disulfide bridges follow: C53–C65, C54–C61, and C58–C64. Residue P63 is modified to 4-hydroxyproline.

The protein belongs to the conotoxin M superfamily. Expressed by the venom duct.

Its subcellular location is the secreted. The polypeptide is Conotoxin TsMMSK-011 (Conus tessulatus (Tessellate cone)).